Here is a 354-residue protein sequence, read N- to C-terminus: 3-isopropylmalate dehydrogenase (354 aa).

An NAD(+)-binding site is contributed by 74–87 (GPKWDDLPPEKRPE). The substrate site is built by Arg95, Arg105, Arg134, and Asp219. Mg(2+) is bound by residues Asp219, Asp243, and Asp247. 275-287 (GSAPDIAGKNIAN) lines the NAD(+) pocket.

The protein belongs to the isocitrate and isopropylmalate dehydrogenases family. LeuB type 1 subfamily. Homodimer. Mg(2+) serves as cofactor. Mn(2+) is required as a cofactor.

It is found in the cytoplasm. The catalysed reaction is (2R,3S)-3-isopropylmalate + NAD(+) = 4-methyl-2-oxopentanoate + CO2 + NADH. Its pathway is amino-acid biosynthesis; L-leucine biosynthesis; L-leucine from 3-methyl-2-oxobutanoate: step 3/4. Catalyzes the oxidation of 3-carboxy-2-hydroxy-4-methylpentanoate (3-isopropylmalate) to 3-carboxy-4-methyl-2-oxopentanoate. The product decarboxylates to 4-methyl-2 oxopentanoate. The protein is 3-isopropylmalate dehydrogenase (leuB) of Thermotoga maritima (strain ATCC 43589 / DSM 3109 / JCM 10099 / NBRC 100826 / MSB8).